The primary structure comprises 346 residues: Melanoma-associated antigen B4 (346 aa).

The span at 1–18 (MPRGQKSKLRAREKRQRT) shows a compositional bias: basic residues. Positions 1–107 (MPRGQKSKLR…STSTERSLKD (107 aa)) are disordered. Polar residues predominate over residues 45-54 (VLRDTASSSL). The segment covering 92–101 (ASSSQASTST) has biased composition (low complexity). The MAGE domain maps to 109-307 (LTRKTKMLVQ…NNFPLLYEEA (199 aa)). The disordered stretch occupies residues 311 to 346 (EEERAGARPRVAARRGTTAMTSAYSRATSSSSSQPM). A compositionally biased stretch (low complexity) spans 318–346 (RPRVAARRGTTAMTSAYSRATSSSSSQPM).

Expressed in testis.

It localises to the cytoplasm. This chain is Melanoma-associated antigen B4 (MAGEB4), found in Homo sapiens (Human).